Consider the following 54-residue polypeptide: Protein PIGBOS1 (54 aa).

The Mitochondrial intermembrane segment spans residues 1–4 (MFRR). The helical transmembrane segment at 5–25 (LTFAQLLFATVLGIAGGVYIF) threads the bilayer. Over 26-54 (QPVFEQYAKDQKELKEKMQLVQESEEKKS) the chain is Cytoplasmic. A required for interaction with CLCC1 region spans residues 30–36 (EQYAKDQ).

Homooligomer. Interacts (via C-terminus) with endoplasmic reticulum (ER) protein CLCC1; the interaction occurs at the mitochondria-associated ER membrane, a zone of contact between the ER and mitochondrial membranes, but does not appear to play a role in ER-mitochondria tethering and is not affected by ER stress.

The protein resides in the mitochondrion outer membrane. In terms of biological role, plays a role in regulation of the unfolded protein response triggered by endoplasmic reticulum (ER) stress resulting from the presence of unfolded proteins in the ER lumen. The sequence is that of Protein PIGBOS1 from Homo sapiens (Human).